We begin with the raw amino-acid sequence, 155 residues long: SsrA-binding protein (155 aa).

The protein belongs to the SmpB family.

The protein resides in the cytoplasm. In terms of biological role, required for rescue of stalled ribosomes mediated by trans-translation. Binds to transfer-messenger RNA (tmRNA), required for stable association of tmRNA with ribosomes. tmRNA and SmpB together mimic tRNA shape, replacing the anticodon stem-loop with SmpB. tmRNA is encoded by the ssrA gene; the 2 termini fold to resemble tRNA(Ala) and it encodes a 'tag peptide', a short internal open reading frame. During trans-translation Ala-aminoacylated tmRNA acts like a tRNA, entering the A-site of stalled ribosomes, displacing the stalled mRNA. The ribosome then switches to translate the ORF on the tmRNA; the nascent peptide is terminated with the 'tag peptide' encoded by the tmRNA and targeted for degradation. The ribosome is freed to recommence translation, which seems to be the essential function of trans-translation. The chain is SsrA-binding protein from Streptococcus pneumoniae serotype 4 (strain ATCC BAA-334 / TIGR4).